A 247-amino-acid chain; its full sequence is MSIQIEVCIDNLESLHNAITGGADRIELCSSLALGGLTPSFGFMKKAAEISPIPVYAMIRPRQGDFLYDNDDIAAMISDIQAAKLAGLQGVVFGVLKANGDIDMPLSARLMKIANDNDLGVTFHRAIDQCSNYKKAIENIAELGCERILTSGLAANAYDGINVLADMVKLANGRFDILAGAGVTAENAKEIIEKTGVKEVHLSGKSTRPSKMKLILDGVKMGAGDLDDFIVPVTDAKKIDAVKQRIK.

Belongs to the CutC family.

The protein resides in the cytoplasm. This is PF03932 family protein CutC from Aliivibrio fischeri (strain MJ11) (Vibrio fischeri).